The chain runs to 1595 residues: Collagen-like protein 2 (1595 aa).

N-linked (GlcNAc...) asparagine; by host glycans are attached at residues Asn87 and Asn134. Collagen-like domains follow at residues Leu97–Val155, Gln175–Gly233, Gly236–Ile295, and Gly299–Lys358. Low complexity predominate over residues Ser181–Asp190. Disordered regions lie at residues Ser181–Leu577 and Thr604–Gly1326. Basic and acidic residues-rich tracts occupy residues Gln191–Lys200, Lys209–Lys448, Tyr456–Lys466, Asp474–Tyr501, Asp510–Glu561, Ile606–Glu615, Lys622–Asp702, Lys718–Ile825, Lys832–Lys883, Lys895–Ile1041, Lys1048–Thr1098, Lys1107–Lys1151, Asn1159–Gln1250, and Lys1265–Ile1300. Residues Asn274, Asn280, and Asn286 are each glycosylated (N-linked (GlcNAc...) asparagine; by host). Residues Asn373, Asn382, Asn400, and Asn409 are each glycosylated (N-linked (GlcNAc...) asparagine; by host). Collagen-like domains follow at residues Gly380–Lys559, Gly608–Asn907, Gly920–Lys1039, Gly1043–Thr1102, and Gly1128–Ser1307. N-linked (GlcNAc...) asparagine; by host glycosylation is found at Asn1345, Asn1420, and Asn1545. The tract at residues Ser1538–Pro1585 is disordered. The span at Lys1558–Pro1585 shows a compositional bias: gly residues.

May be hydroxylated on lysine by the viral-encoded procollagen-lysine,2-oxoglutarate 5-dioxygenase.

It is found in the virion. May participate in the formation of a layer of cross-linked glycosylated fibrils at the viral surface thus giving it a hairy-like appearance. The sequence is that of Collagen-like protein 2 from Acanthamoeba polyphaga (Amoeba).